The following is a 488-amino-acid chain: 3-octaprenyl-4-hydroxybenzoate carboxy-lyase (488 aa).

A Mn(2+)-binding site is contributed by Asn-172. Residues 175-177 (IYR), 189-191 (RWL), and 194-195 (RG) each bind prenylated FMN. Residue Glu-238 participates in Mn(2+) binding. Asp-287 functions as the Proton donor in the catalytic mechanism.

It belongs to the UbiD family. As to quaternary structure, homohexamer. Prenylated FMN serves as cofactor. It depends on Mn(2+) as a cofactor.

It is found in the cell membrane. The catalysed reaction is a 4-hydroxy-3-(all-trans-polyprenyl)benzoate + H(+) = a 2-(all-trans-polyprenyl)phenol + CO2. The protein operates within cofactor biosynthesis; ubiquinone biosynthesis. In terms of biological role, catalyzes the decarboxylation of 3-octaprenyl-4-hydroxy benzoate to 2-octaprenylphenol, an intermediate step in ubiquinone biosynthesis. The protein is 3-octaprenyl-4-hydroxybenzoate carboxy-lyase of Alkalilimnicola ehrlichii (strain ATCC BAA-1101 / DSM 17681 / MLHE-1).